A 406-amino-acid chain; its full sequence is Olfactomedin-like protein 3 (406 aa).

A signal peptide spans 1–21 (MGPSTPLLILFLLSWSGPLQG). Residues 25-101 (HLVEYMERRL…REVDYLETQN (77 aa)) adopt a coiled-coil conformation. The Olfactomedin-like domain occupies 134 to 401 (DCGYTISQVR…QIVYKLEMRK (268 aa)). A disulfide bond links Cys135 and Cys328. N-linked (GlcNAc...) asparagine glycans are attached at residues Asn177 and Asn248.

Belongs to the OLFML3 family. Abundant in placenta, moderate in liver and heart, whereas fairly weak in other tissues examined. On term placenta, mainly localized extracellularly surrounding the syncytiotrophoblastic cells and very rarely expressed in the maternal decidua layer.

It localises to the secreted. Its function is as follows. Secreted scaffold protein that plays an essential role in dorsoventral patterning during early development. Stabilizes axial formation by restricting chordin (CHRD) activity on the dorsal side. Acts by facilitating the association between the tolloid proteases and their substrate chordin (CHRD), leading to enhance chordin (CHRD) degradation. May have matrix-related function involved in placental and embryonic development, or play a similar role in other physiological processes. This is Olfactomedin-like protein 3 (OLFML3) from Homo sapiens (Human).